The following is a 745-amino-acid chain: Immunoglobulin superfamily containing leucine-rich repeat protein 2 (745 aa).

The first 18 residues, 1 to 18 (MFPLRALWLVWALLGVAG), serve as a signal peptide directing secretion. The 33-residue stretch at 19 to 51 (SCPEPCACVDKYAHQFADCAYKELREVPEGLPA) folds into the LRRNT domain. Topologically, residues 19-589 (SCPEPCACVD…VFSTKKELPS (571 aa)) are extracellular. N-linked (GlcNAc...) asparagine glycosylation occurs at asparagine 52. LRR repeat units lie at residues 52–73 (NVTT…AFAD), 76–97 (QVTS…ALAV), 100–123 (QLKN…RNLS), 124–145 (ALQL…ALGA), and 148–169 (DLRS…TFDA). Asparagine 121 carries N-linked (GlcNAc...) asparagine glycosylation. The LRRCT domain maps to 181–232 (NPFHCGCGLVWLQAWAASTRVSLPEPDSIACASPPALQGVPVYRLPALPCAP). Positions 233-371 (PSVHLSAEPP…GANSTSIRVA (139 aa)) constitute an Ig-like domain. A disulfide bond links cysteine 260 and cysteine 355. The segment at 287–326 (VLSGEDDGVGAEEGEGEGDGDLLTQTQAQTPTPAPAWPAP) is disordered. Acidic residues predominate over residues 290–306 (GEDDGVGAEEGEGEGDG). Residues asparagine 337 and asparagine 364 are each glycosylated (N-linked (GlcNAc...) asparagine). Residues 375-466 (TGPPKHAPGA…QRCGNGDPSR (92 aa)) form a disordered region. Over residues 431–449 (TETEPEEDTSEGEEAEDQI) the composition is skewed to acidic residues. Asparagine 474 and asparagine 563 each carry an N-linked (GlcNAc...) asparagine glycan. The chain crosses the membrane as a helical span at residues 590–610 (LLVIVAVSVFLLVLATVPLLG). Over 611-745 (AACCHLLAKH…INGNYRQTAG (135 aa)) the chain is Cytoplasmic. The tract at residues 656–722 (KSYPAGGEAG…FEAGSEYSDR (67 aa)) is disordered. Over residues 665-683 (GGEEPEDVQGEGLDEDAEQ) the composition is skewed to acidic residues. Phosphotyrosine is present on tyrosine 719. Residue serine 720 is modified to Phosphoserine.

Homomultimer. Interacts with NTRK1/TrkA.

It localises to the cell membrane. Required for axon extension during neural development. This Homo sapiens (Human) protein is Immunoglobulin superfamily containing leucine-rich repeat protein 2 (ISLR2).